The sequence spans 159 residues: Ribosomal RNA large subunit methyltransferase H (159 aa).

S-adenosyl-L-methionine contacts are provided by residues glycine 108 and 127 to 132 (FGPMTF).

The protein belongs to the RNA methyltransferase RlmH family. Homodimer.

It localises to the cytoplasm. The catalysed reaction is pseudouridine(1915) in 23S rRNA + S-adenosyl-L-methionine = N(3)-methylpseudouridine(1915) in 23S rRNA + S-adenosyl-L-homocysteine + H(+). Specifically methylates the pseudouridine at position 1915 (m3Psi1915) in 23S rRNA. The chain is Ribosomal RNA large subunit methyltransferase H from Magnetococcus marinus (strain ATCC BAA-1437 / JCM 17883 / MC-1).